Consider the following 356-residue polypeptide: Peptide methionine sulfoxide reductase MsrA/MsrB (356 aa).

The tract at residues His46–Glu199 is peptide methionine sulfoxide reductase A. Cys54 is a catalytic residue. One can recognise a MsrB domain in the interval Asp216 to Leu339. Catalysis depends on Cys328, which acts as the Nucleophile.

The protein in the N-terminal section; belongs to the MsrA Met sulfoxide reductase family. In the C-terminal section; belongs to the MsrB Met sulfoxide reductase family.

It carries out the reaction L-methionyl-[protein] + [thioredoxin]-disulfide + H2O = L-methionyl-(S)-S-oxide-[protein] + [thioredoxin]-dithiol. The catalysed reaction is [thioredoxin]-disulfide + L-methionine + H2O = L-methionine (S)-S-oxide + [thioredoxin]-dithiol. The enzyme catalyses L-methionyl-[protein] + [thioredoxin]-disulfide + H2O = L-methionyl-(R)-S-oxide-[protein] + [thioredoxin]-dithiol. Has an important function as a repair enzyme for proteins that have been inactivated by oxidation. Catalyzes the reversible oxidation-reduction of methionine sulfoxide in proteins to methionine. The sequence is that of Peptide methionine sulfoxide reductase MsrA/MsrB (msrAB) from Aggregatibacter actinomycetemcomitans (Actinobacillus actinomycetemcomitans).